A 171-amino-acid polypeptide reads, in one-letter code: S-ribosylhomocysteine lyase (171 aa).

Fe cation-binding residues include histidine 54, histidine 58, and cysteine 128.

It belongs to the LuxS family. As to quaternary structure, homodimer. It depends on Fe cation as a cofactor.

It catalyses the reaction S-(5-deoxy-D-ribos-5-yl)-L-homocysteine = (S)-4,5-dihydroxypentane-2,3-dione + L-homocysteine. Its function is as follows. Involved in the synthesis of autoinducer 2 (AI-2) which is secreted by bacteria and is used to communicate both the cell density and the metabolic potential of the environment. The regulation of gene expression in response to changes in cell density is called quorum sensing. Catalyzes the transformation of S-ribosylhomocysteine (RHC) to homocysteine (HC) and 4,5-dihydroxy-2,3-pentadione (DPD). The polypeptide is S-ribosylhomocysteine lyase (Escherichia coli (strain 55989 / EAEC)).